A 317-amino-acid polypeptide reads, in one-letter code: Long form salivary protein D7L2 (317 aa).

Residues 1–20 (MYKLLVALHLILCTVSHVKT) form the signal peptide. Cystine bridges form between Cys-39/Cys-76, Cys-72/Cys-131, Cys-181/Cys-214, Cys-195/Cys-316, and Cys-255/Cys-266. Thromboxane A2 is bound by residues Trp-58 and Tyr-73. The serotonin site is built by Glu-182, Tyr-264, Asp-281, Asp-284, and Met-308.

It belongs to the PBP/GOBP family. As to expression, female salivary gland.

The protein resides in the secreted. Its function is as follows. Modulates blood feeding of female mosquitoes on vertebrate species by binding and sequestering different mediators involved in the host response, such as biogenic amines and eicosanoids. Binds serotonin with high affinity. Binds tryptamine, octopamine, dopamine and noradrenaline with low affinity. Binds leukotriene C4, leukotriene D4, leukotriene E4 and U-46619, a stable analog of thromboxane A2. Does not bind leukotriene B4, adrenaline, histamine and ADP. Inhibits platelet aggregation induced by low concentrations of collagen and arachidonic acid but not by ADP or adrenaline. The protein is Long form salivary protein D7L2 of Anopheles darlingi (Mosquito).